The sequence spans 90 residues: UPF0335 protein RPA4190 (90 aa).

This sequence belongs to the UPF0335 family.

In Rhodopseudomonas palustris (strain ATCC BAA-98 / CGA009), this protein is UPF0335 protein RPA4190.